Reading from the N-terminus, the 571-residue chain is Potassium-transporting ATPase potassium-binding subunit (571 aa).

A run of 12 helical transmembrane segments spans residues 5–25 (GWMQ…PLGG), 64–84 (LAYA…LYAL), 136–156 (GLTH…VALI), 179–199 (LYVL…QGMP), 220–240 (VGPV…GGFF), 254–274 (LSNF…TNVF), 285–305 (WAIL…TYWA), 330–350 (FGIA…CGAV), 375–395 (IIGG…VAIF), 421–441 (MLGI…ATVV), 488–508 (LAIG…AIAG), and 527–547 (GGLF…LTFF).

Belongs to the KdpA family. As to quaternary structure, the system is composed of three essential subunits: KdpA, KdpB and KdpC.

The protein localises to the cell inner membrane. Part of the high-affinity ATP-driven potassium transport (or Kdp) system, which catalyzes the hydrolysis of ATP coupled with the electrogenic transport of potassium into the cytoplasm. This subunit binds the periplasmic potassium ions and delivers the ions to the membrane domain of KdpB through an intramembrane tunnel. The polypeptide is Potassium-transporting ATPase potassium-binding subunit (Methylorubrum extorquens (strain CM4 / NCIMB 13688) (Methylobacterium extorquens)).